Consider the following 283-residue polypeptide: Large ribosomal subunit protein uL2 (283 aa).

Disordered stretches follow at residues T34–H53 and A224–K283. The span at N232–W245 shows a compositional bias: gly residues. Residues A256–S268 show a composition bias toward basic residues.

It belongs to the universal ribosomal protein uL2 family. As to quaternary structure, part of the 50S ribosomal subunit. Forms a bridge to the 30S subunit in the 70S ribosome.

Functionally, one of the primary rRNA binding proteins. Required for association of the 30S and 50S subunits to form the 70S ribosome, for tRNA binding and peptide bond formation. It has been suggested to have peptidyltransferase activity; this is somewhat controversial. Makes several contacts with the 16S rRNA in the 70S ribosome. This Methylacidiphilum infernorum (isolate V4) (Methylokorus infernorum (strain V4)) protein is Large ribosomal subunit protein uL2.